The primary structure comprises 261 residues: MVSWIISRAVVLVFGLLYPAYASYKAVKTKNVRDYVRWMMYWIVFALFMTVETFTDIFIAWFPFYYEIKMAFVVWLLSPYTRGASLLYRKCIHPTLSLKEKEIDSYIIQAKERSYESFVNIGRKGLNIAASAAVQAATKGQGALVGRLRSFSMQDLRALPDDTPIHYTDALYPDEPQLHRRPMGFPTTSQADSDSMDERWSDSEIAETRTAARTRGGMPSKSLQRSQSLRVSKKKGLSREVSTKTTKPRAKKKPAQSEPEN.

The next 2 membrane-spanning stretches (helical) occupy residues 1 to 21 and 35 to 55; these read MVSW…YPAY and YVRW…ETFT. Positions 167–261 are disordered; it reads YTDALYPDEP…KKPAQSEPEN (95 aa). The segment covering 221 to 230 has biased composition (polar residues); it reads KSLQRSQSLR.

It belongs to the DP1 family. Interacts with microtubules. As to expression, during gastrulation, expressed on the dorsal side of the embryo and then in the neural plate and neural tube. At tailbud stages, expressed in the somites, neural tube and otic vesicle.

Its subcellular location is the endoplasmic reticulum membrane. In terms of biological role, microtubule-binding protein required to ensure proper cell division and nuclear envelope reassembly by sequestering the endoplasmic reticulum away from chromosomes during mitosis. Probably acts by clearing the endoplasmic reticulum membrane from metaphase chromosomes. May play a role in the maintenance of both the nervous system and the musculature. This is Receptor expression-enhancing protein 4 (reep4) from Xenopus laevis (African clawed frog).